The chain runs to 230 residues: Ribonuclease 3 (230 aa).

The RNase III domain maps to 5–127 (HEHLARKLGI…ILGAVLRDQG (123 aa)). Mg(2+) is bound at residue Glu-40. Asp-44 is an active-site residue. Residues Asp-113 and Glu-116 each contribute to the Mg(2+) site. Glu-116 is an active-site residue. The 71-residue stretch at 154-224 (DPKTRLQELM…AENMLSRLSD (71 aa)) folds into the DRBM domain. Residues 202 to 230 (GEGSSRKKAEQQAAENMLSRLSDQSRFRV) are disordered.

It belongs to the ribonuclease III family. As to quaternary structure, homodimer. It depends on Mg(2+) as a cofactor.

It localises to the cytoplasm. It carries out the reaction Endonucleolytic cleavage to 5'-phosphomonoester.. Its function is as follows. Digests double-stranded RNA. Involved in the processing of primary rRNA transcript to yield the immediate precursors to the large and small rRNAs (23S and 16S). Processes some mRNAs, and tRNAs when they are encoded in the rRNA operon. Processes pre-crRNA and tracrRNA of type II CRISPR loci if present in the organism. The sequence is that of Ribonuclease 3 from Methylococcus capsulatus (strain ATCC 33009 / NCIMB 11132 / Bath).